The sequence spans 378 residues: MKYQGLLAIAGCIASASAVSVSGAAEGFAKGVTGGGSATAVYPSTTAELVSYLGDSEARVIVLTKTFDFTGTEGTTTATGCAPWGTASACQLAINQNDWCTNYEPDAPSVSVTYDNAGTLGITVKSNKSLLGSGSSGVIKGKGLRIVSGASNIIIQNIAITDINPKYVWGGDAITINNADMVWIDHVTTARIGRQHLVLGTSASNRVTISNNYFNGVSSYSATCDGYHYWGIYLDGSNDLVTMKGNYIYHFSGRSPKVQGNTLLHAVNNYWYDSSGHAFEIGSGGYVLAEGNVFQNIDTIVESPVDGQLFTSPDSTTNKVCSTYLGHVCQVNGFGSSGTFSQADTGFLSNFAGKNIASASAYTVVQSSVPSSAGQGKI.

The signal sequence occupies residues 1–18 (MKYQGLLAIAGCIASASA). Cystine bridges form between Cys-81–Cys-100 and Cys-90–Cys-224. Asn-127 is a glycosylation site (N-linked (GlcNAc...) asparagine). Arg-254 is an active-site residue. Cys-321 and Cys-329 form a disulfide bridge.

It belongs to the polysaccharide lyase 1 family.

It localises to the secreted. It carries out the reaction Eliminative cleavage of (1-&gt;4)-alpha-D-galacturonan methyl ester to give oligosaccharides with 4-deoxy-6-O-methyl-alpha-D-galact-4-enuronosyl groups at their non-reducing ends.. In terms of biological role, pectinolytic enzymes consist of four classes of enzymes: pectin lyase, polygalacturonase, pectin methylesterase and rhamnogalacturonase. Among pectinolytic enzymes, pectin lyase is the most important in depolymerization of pectin, since it cleaves internal glycosidic bonds of highly methylated pectins. This is Probable pectin lyase A (pelA) from Neosartorya fischeri (strain ATCC 1020 / DSM 3700 / CBS 544.65 / FGSC A1164 / JCM 1740 / NRRL 181 / WB 181) (Aspergillus fischerianus).